The chain runs to 138 residues: Ribosomal RNA large subunit methyltransferase H (138 aa).

S-adenosyl-L-methionine is bound by residues Leu-57, Gly-86, and 105–110 (LSPLTF).

This sequence belongs to the RNA methyltransferase RlmH family. Homodimer.

The protein localises to the cytoplasm. The enzyme catalyses pseudouridine(1915) in 23S rRNA + S-adenosyl-L-methionine = N(3)-methylpseudouridine(1915) in 23S rRNA + S-adenosyl-L-homocysteine + H(+). Its function is as follows. Specifically methylates the pseudouridine at position 1915 (m3Psi1915) in 23S rRNA. This Prochlorococcus marinus (strain MIT 9301) protein is Ribosomal RNA large subunit methyltransferase H.